The primary structure comprises 381 residues: cAMP-dependent protein kinase type I-alpha regulatory subunit (381 aa).

Position 1 is an N-acetylmethionine (Met1). Ala2 bears the N-acetylalanine; in cAMP-dependent protein kinase type I-alpha regulatory subunit, N-terminally processed mark. The tract at residues 2–136 (ASGSMATSEE…ALAKAIEKNV (135 aa)) is dimerization and phosphorylation. Ser3 carries the post-translational modification Phosphoserine. Residues 73 to 96 (IRTDSREDEISPPPPNPVVKGRRR) form a disordered region. Thr75 bears the Phosphothreonine mark. Residues Ser77 and Ser83 each carry the phosphoserine modification. A Pseudophosphorylation motif motif is present at residues 96-100 (RRGAI). Ser101 is subject to Phosphoserine. 3',5'-cyclic AMP-binding positions include 137 to 254 (LFSH…SKVS), Glu202, Arg211, 255 to 381 (ILES…SLSV), Glu326, and Arg335. Residue Ser258 is modified to Phosphoserine.

The protein belongs to the cAMP-dependent kinase regulatory chain family. In terms of assembly, the inactive holoenzyme is composed of two regulatory chains and two catalytic chains. Activation by cAMP releases the two active catalytic monomers and the regulatory dimer. Interacts with PRKACA and PRKACB. PRKAR1A also interacts with RFC2; the complex may be involved in cell survival. Interacts with AKAP4. Interacts with RARA; the interaction occurs in the presence of cAMP or FSH and regulates RARA transcriptional activity. Interacts with the phosphorylated form of PJA2. Interacts with PRKX; regulates this cAMP-dependent protein kinase. Interacts with CBFA2T3. Interacts with smAKAP; this interaction may target PRKAR1A to the plasma membrane. Interacts with AICDA. In terms of processing, the pseudophosphorylation site binds to the substrate-binding region of the catalytic chain, resulting in the inhibition of its activity.

It localises to the cell membrane. Functionally, regulatory subunit of the cAMP-dependent protein kinases involved in cAMP signaling in cells. The protein is cAMP-dependent protein kinase type I-alpha regulatory subunit (Prkar1a) of Mus musculus (Mouse).